Reading from the N-terminus, the 278-residue chain is Undecaprenyl-diphosphatase (278 aa).

A run of 6 helical transmembrane segments spans residues 44 to 64 (FLEM…MTIY), 84 to 104 (WQLW…AVPL), 112 to 132 (FNFM…FIWI), 187 to 207 (SVAA…YSGL), 224 to 244 (VWIL…VIRF), and 254 to 274 (FTVF…YAFI).

Belongs to the UppP family.

It localises to the cell membrane. It catalyses the reaction di-trans,octa-cis-undecaprenyl diphosphate + H2O = di-trans,octa-cis-undecaprenyl phosphate + phosphate + H(+). Catalyzes the dephosphorylation of undecaprenyl diphosphate (UPP). Confers resistance to bacitracin. This chain is Undecaprenyl-diphosphatase, found in Streptococcus suis (strain 98HAH33).